A 276-amino-acid polypeptide reads, in one-letter code: Large ribosomal subunit protein uL2 (276 aa).

The disordered stretch occupies residues 223–276; that stretch reads GAAMNPVDHPHGGGEGRAPRGRPPASPWGWQTKGLKTRKRRKPSSRFIIARRKK. Residues 230-240 are compositionally biased toward basic and acidic residues; that stretch reads DHPHGGGEGRA. Residues 257–276 show a composition bias toward basic residues; that stretch reads LKTRKRRKPSSRFIIARRKK.

Belongs to the universal ribosomal protein uL2 family. Part of the 50S ribosomal subunit. Forms a bridge to the 30S subunit in the 70S ribosome.

Its function is as follows. One of the primary rRNA binding proteins. Required for association of the 30S and 50S subunits to form the 70S ribosome, for tRNA binding and peptide bond formation. It has been suggested to have peptidyltransferase activity; this is somewhat controversial. Makes several contacts with the 16S rRNA in the 70S ribosome. The protein is Large ribosomal subunit protein uL2 of Thermus thermophilus (strain ATCC BAA-163 / DSM 7039 / HB27).